Reading from the N-terminus, the 441-residue chain is Squalene synthase (441 aa).

Helical transmembrane passes span 293-313 (SFQFCAIPQVMAIATLALVFG) and 420-440 (FKFNVLLSILFTVFGALYWYA).

This sequence belongs to the phytoene/squalene synthase family. Requires Mg(2+) as cofactor.

The protein resides in the endoplasmic reticulum membrane. It carries out the reaction 2 (2E,6E)-farnesyl diphosphate + NADPH + H(+) = squalene + 2 diphosphate + NADP(+). The catalysed reaction is 2 (2E,6E)-farnesyl diphosphate + NADH + H(+) = squalene + 2 diphosphate + NAD(+). It functions in the pathway terpene metabolism; lanosterol biosynthesis; lanosterol from farnesyl diphosphate: step 1/3. In terms of biological role, catalyzes the condensation of 2 two farnesyl pyrophosphate moieties to form squalene. It is the first committed enzyme of the sterol biosynthesis pathway. Required for the biosynthesis of ergosterol. This Eremothecium gossypii (strain ATCC 10895 / CBS 109.51 / FGSC 9923 / NRRL Y-1056) (Yeast) protein is Squalene synthase (ERG9).